A 648-amino-acid polypeptide reads, in one-letter code: MSAADPIQDNKSWTVADSAALYGLDHWGHPYFSANANGHVQVQPRGDQGSCLDLVELVEELKSRNLNLPLLIRFDDILEDRLERLHSAFEEAISKYGYAGRYQGVFPVKCNQQRHVVEQLVESGRQWHFGLEAGSKAELLIALSLVNDPEALLICNGYKDQRYIETAILARRLGRQPVVVIEQPDEVERIIRSSQELGAAPFLGVRAKLTTRSTGHWSSSVGEKAKFGLSVPDLLATVEALRQADLLSDLRLLHFHIGSQINDIAVLKDALQEAAQIYVELTKLGAPMGYLDVGGGLGVDYDGSRSASAASTNYSLQNYANDVVATVRECCKPHGITLPILVSESGRAIASHFSILVFDVLGTGTVPGAIPKQTVEEPLTIHNLRETLSGVMATQKGAVSEISRLQEAWNDAIKFKEDALAAFRLGYISLPERALAEQLTGACAEAIMGQLPCNETIPDDLQSLRAVLASTYYANLSIFRSAPDTWAIEQLFPLMPIHRLNEEPTQLGHFADLTCDSDGKLDRFIGNGQTKTLLELHNLRQNEAYMIGMFLAGAYQEVMGNLHNLFGSTNAVHIRLTTAGGYQVDHVVRGNTNSEVLEAMEHNPELLLERLRLASELAIQRGELKINDVRRLMDHLEASLRQTTYLQG.

Residue K109 is modified to N6-(pyridoxal phosphate)lysine. Position 291 to 301 (291 to 301 (LDVGGGLGVDY)) interacts with substrate.

The protein belongs to the Orn/Lys/Arg decarboxylase class-II family. SpeA subfamily. Requires Mg(2+) as cofactor. It depends on pyridoxal 5'-phosphate as a cofactor.

The enzyme catalyses L-arginine + H(+) = agmatine + CO2. In terms of biological role, catalyzes the biosynthesis of agmatine from arginine. This chain is Biosynthetic arginine decarboxylase, found in Prochlorococcus marinus (strain MIT 9313).